The primary structure comprises 156 residues: Snaclec rhinocetin subunit alpha (156 aa).

An N-terminal signal peptide occupies residues 1-23 (MGRFIFLSSGWLVVFLSLSGTGA). 3 disulfides stabilise this stretch: C27–C38, C55–C150, and C125–C142. One can recognise a C-type lectin domain in the interval 34 to 151 (YEGHCYKFFF…CGDNYPFVCM (118 aa)).

Belongs to the snaclec family. Heterodimer; disulfide-linked. In terms of tissue distribution, expressed by the venom gland.

The protein resides in the secreted. In terms of biological role, antagonist of the alpha-2 subunit of the integrin alpha-2/beta-1 (ITGA2/ITGB1) on human platelets and endothelial cells. This protein inhibits collagen-stimulated activation of human platelets in a dose-dependent manner. In addition, it antagonizes the binding of monoclonal antibodies against the alpha-2 subunit of integrin alpha-2/beta-1 to platelets and it coimmunoprecipitates with this integrin. This is Snaclec rhinocetin subunit alpha from Bitis rhinoceros (West African gaboon viper).